A 456-amino-acid chain; its full sequence is MTLTALNAISPIDGRYVNKTRALSPYFSEFALTYYRLMVEIKWFESLAANDTIPEVPALDNKARKFLSDLISNFNESEAEKIKEFEKQTNHDVKAVEYYLKDKFQENEQLKSCVAFIHFACTSEDINNLAYALMIKQAIAQVIQPTIAEIMGSITLLGKQHADVAMLSRTHGQPATPTTMGKELVNFVARLKRPQQQLAEVLIPAKFNGAVGNYNAHVAAYPEVDWRKHCANFVTSLGLSFNAYTTQIEPHDGIAEVSQIMVRINNILLDYTQDIWSYISLGYFKQKTIAEEVGSSTMPHKVNPIDFENAEGNLGLSNALFIHFANKLTQSRMQRDLSDSTVLRNLGVAFSYSLIAYHSVAKGNDKLQINKSALQKDLSENWEVLAEAIQTVMRRYNEPNAYEQLKELTRGQMIDAENLKKFIKTLSIPEEAKAELMKLTPETYTGLATQLVKAFS.

N(6)-(1,2-dicarboxyethyl)-AMP contacts are provided by residues 15–16, 90–92, and 122–123; these read RY, NHD, and TS. Histidine 171 acts as the Proton donor/acceptor in catalysis. Residue glutamine 247 coordinates N(6)-(1,2-dicarboxyethyl)-AMP. Serine 295 serves as the catalytic Proton donor/acceptor. Residues serine 296, 301–303, asparagine 309, arginine 335, and 340–344 each bind N(6)-(1,2-dicarboxyethyl)-AMP; these read KVN and STVLR.

It belongs to the lyase 1 family. Adenylosuccinate lyase subfamily. As to quaternary structure, homotetramer. Residues from neighboring subunits contribute catalytic and substrate-binding residues to each active site.

It carries out the reaction N(6)-(1,2-dicarboxyethyl)-AMP = fumarate + AMP. It catalyses the reaction (2S)-2-[5-amino-1-(5-phospho-beta-D-ribosyl)imidazole-4-carboxamido]succinate = 5-amino-1-(5-phospho-beta-D-ribosyl)imidazole-4-carboxamide + fumarate. The protein operates within purine metabolism; AMP biosynthesis via de novo pathway; AMP from IMP: step 2/2. It participates in purine metabolism; IMP biosynthesis via de novo pathway; 5-amino-1-(5-phospho-D-ribosyl)imidazole-4-carboxamide from 5-amino-1-(5-phospho-D-ribosyl)imidazole-4-carboxylate: step 2/2. Functionally, catalyzes two reactions in de novo purine nucleotide biosynthesis. Catalyzes the breakdown of 5-aminoimidazole- (N-succinylocarboxamide) ribotide (SAICAR or 2-[5-amino-1-(5-phospho-beta-D-ribosyl)imidazole-4-carboxamido]succinate) to 5-aminoimidazole-4-carboxamide ribotide (AICAR or 5-amino-1-(5-phospho-beta-D-ribosyl)imidazole-4-carboxamide) and fumarate, and of adenylosuccinate (ADS or N(6)-(1,2-dicarboxyethyl)-AMP) to adenosine monophosphate (AMP) and fumarate. This Legionella pneumophila (strain Corby) protein is Adenylosuccinate lyase (purB).